An 84-amino-acid chain; its full sequence is U4-theraphotoxin-Hhn1b (84 aa).

Positions 1 to 22 are cleaved as a signal peptide; that stretch reads MKVTLIAILTCAAVLVLHTTAA. Residues 23 to 47 constitute a propeptide that is removed on maturation; it reads EELEESQLMEVGMPDTELAAVDEER. Intrachain disulfides connect C51/C65, C55/C76, and C70/C81.

Belongs to the neurotoxin 12 (Hwtx-2) family. 02 (Hwtx-2) subfamily. In terms of tissue distribution, expressed by the venom gland.

The protein localises to the secreted. Postsynaptic neurotoxin. In Cyriopagopus hainanus (Chinese bird spider), this protein is U4-theraphotoxin-Hhn1b.